The primary structure comprises 355 residues: F-box only protein 32 (355 aa).

Positions 62–67 match the Nuclear localization signal motif; that stretch reads KKRKKD. The Nuclear export signal signature appears at 169–173; that stretch reads LLQTL. The region spanning 223–271 is the F-box domain; sequence LTFTDLPLCLQLNIMQRLSDGRDLVSLGQVAPDLHVLSEDRLLWKKLCQ. The Bipartite nuclear localization signal motif lies at 280–295; sequence RKRLILSDKGQLDWKK.

As to quaternary structure, part of the SCF (SKP1-CUL1-F-box) E3 ubiquitin-protein ligase complex SCF(FBXO32) formed of CUL1, SKP1, RBX1 and FBXO32.

It is found in the cytoplasm. The protein localises to the nucleus. The protein operates within protein modification; protein ubiquitination. Substrate recognition component of a SCF (SKP1-CUL1-F-box protein) E3 ubiquitin-protein ligase complex which mediates the ubiquitination and subsequent proteasomal degradation of target proteins. Probably recognizes and binds to phosphorylated target proteins during skeletal muscle atrophy. Recognizes TERF1. This Bos taurus (Bovine) protein is F-box only protein 32 (FBXO32).